Consider the following 467-residue polypeptide: MATEYALRMGDGKRVFLTKEKILEELEAGMANASDLGEIPDLSADEIDKLAEILMMPGKAVSVEQGMEVPVTHDIGTIRLDGDQGNSGVGIPSSRLVGCMTHERAFGADTMELGHIDYSFKPVKPVVSNECQAMEVCQQNMIIPLFYGAMPNMGLYYTPDGPFENPGDLMKAFKIQEAWESMEHAAEHLTRDTVWVMQKLFASGTDGVNFDTTAAAGDADMYGTLHAIEALRKEFPDMYIEAGMAGECVLGMHGNLQYDGVTLAGLWPHQQAPLVAKAGANVFGPVCNTNTSKTSAWNLARAVNFMKAAVQASPIPCHVDMGMGVGGIPMLETPPVDAVTRASKAMVEVAGVDGIOIGVGDPLGMPISHIMASGMTGIRAAGDLVARMQFSKNMRIGEAKEYVAKKLNVDVMDLADEHVMRELREELDIGVITSVPGAAKGIAAKMNIEKLLDIKINSCNLFRKQIQ.

Residue Pyl-356 is a non-standard amino acid, pyrrolysine.

This sequence belongs to the dimethylamine methyltransferase family.

The catalysed reaction is Co(I)-[dimethylamine-specific corrinoid protein] + dimethylamine + H(+) = methyl-Co(III)-[dimethylamine-specific corrinoid protein] + methylamine. Its pathway is one-carbon metabolism; methanogenesis from dimethylamine. In terms of biological role, catalyzes the transfer of a methyl group from dimethylamine to the corrinoid cofactor of MtbC. The polypeptide is Dimethylamine methyltransferase MtbB1 (mtbB1) (Methanosarcina acetivorans (strain ATCC 35395 / DSM 2834 / JCM 12185 / C2A)).